An 835-amino-acid chain; its full sequence is Lon protease (835 aa).

Residues 36–234 (VHVFPLLRRP…KALILLKKEL (199 aa)) form the Lon N-terminal domain. 387 to 394 (GPPGVGKT) serves as a coordination point for ATP. A Lon proteolytic domain is found at 646–828 (RTPVGVCMGL…DQVFKISFPN (183 aa)). Residues Ser734 and Lys777 contribute to the active site.

It belongs to the peptidase S16 family. Homohexamer. Organized in a ring with a central cavity.

The protein localises to the cytoplasm. It carries out the reaction Hydrolysis of proteins in presence of ATP.. Functionally, ATP-dependent serine protease that mediates the selective degradation of mutant and abnormal proteins as well as certain short-lived regulatory proteins. Required for cellular homeostasis and for survival from DNA damage and developmental changes induced by stress. Degrades polypeptides processively to yield small peptide fragments that are 5 to 10 amino acids long. Binds to DNA in a double-stranded, site-specific manner. In Protochlamydia amoebophila (strain UWE25), this protein is Lon protease.